An 841-amino-acid chain; its full sequence is Rho guanine nucleotide exchange factor 15 (841 aa).

3 disordered regions span residues 1-179 (MSAQ…QARA), 239-261 (RRAS…HPAV), and 279-333 (KPPK…REEE). Residues 39-53 (NGSSPQELPRNSNDA) show a composition bias toward polar residues. Residues 65–110 (PPAASLKPPALLPPSASRASLDSQTSPDSPSSTPTPSPVSRRSASP) are compositionally biased toward low complexity. Ser-107 and Ser-109 each carry phosphoserine. Residues 111-124 (EPAPRSPVPPPKPS) are compositionally biased toward pro residues. Phosphotyrosine; by EPHB2 is present on Tyr-353. The DH domain maps to 417–601 (RMQESLFEVV…SKIIERCSAE (185 aa)). Residues 765–793 (ESSAPAKTEGRSLESRAAPKHLHKTPEGW) form a disordered region.

In terms of assembly, interacts with EPHB2. Interacts with EPHA4. In terms of processing, phosphorylated on tyrosine residues upon EFNA1 stimulation. EPHB2-dependent phosphorylation at Tyr-353 triggers UBE3A-mediated ubiquitination. Post-translationally, ubiquitinated; UBE3A-mediated ubiquitination and degradation by the proteasome promotes EFNB1-dependent synapse formation. Expressed in the vascular smooth muscle of coronary artery.

The protein localises to the cell projection. The protein resides in the dendrite. In terms of biological role, specific GEF for RhoA activation. Does not activate RAC1 or CDC42. Regulates vascular smooth muscle contractility. Negatively regulates excitatory synapse development by suppressing the synapse-promoting activity of EPHB2. This Homo sapiens (Human) protein is Rho guanine nucleotide exchange factor 15 (ARHGEF15).